Consider the following 229-residue polypeptide: Uracil-DNA glycosylase (229 aa).

Aspartate 70 acts as the Proton acceptor in catalysis.

The protein belongs to the uracil-DNA glycosylase (UDG) superfamily. UNG family.

It localises to the cytoplasm. It catalyses the reaction Hydrolyzes single-stranded DNA or mismatched double-stranded DNA and polynucleotides, releasing free uracil.. Functionally, excises uracil residues from the DNA which can arise as a result of misincorporation of dUMP residues by DNA polymerase or due to deamination of cytosine. This chain is Uracil-DNA glycosylase, found in Chlamydia trachomatis serovar A (strain ATCC VR-571B / DSM 19440 / HAR-13).